The primary structure comprises 167 residues: Iron-sulfur cluster assembly enzyme ISCU (167 aa).

The transit peptide at 1–34 (MAAAGAFRLRRAASALLLRSPRLPARELSAPARL) directs the protein to the mitochondrion. Ser-14 bears the Phosphoserine; by MTOR mark. Residue Pro-46 coordinates Zn(2+). Cys-69 acts as the Cysteine persulfide intermediate in catalysis. Cys-69 is modified (cysteine persulfide). Residues Gly-70, Asp-71, Cys-95, Lys-112, and Cys-138 each contribute to the Zn(2+) site. The Cysteine persulfide intermediate role is filled by Cys-138. At Cys-138 the chain carries Cysteine persulfide.

The protein belongs to the NifU family. Homodimer; Tyr-35-mediated dimerization of two iron- and sulfide-containing ISCU subunit bind to the cysteine desulfurase complex. Component of the mitochondrial core iron-sulfur cluster (ISC) complex composed of NFS1, LYRM4, NDUFAB1, ISCU, FXN, and FDX2; this complex is an heterohexamer containing two copies of each monomer. Interacts (D-state) with NFS1 (homodimer form); each monomer interacts with the C-terminal regions of each NFS1 monomer. Interacts (monomer form) with FXN (via ferrous form); the interaction is possible when both are bound to the dimeric form of the cysteine desulfurase complex (NFS1:LYRM4) and enhances FXN interaction to the dimeric form of the cysteine desulfurase complex (NFS1:LYRM4). Interacts with GLRX5. Interacts (D-state) with HSPA9. Interacts (S-state) with HSCB; this interaction stimulates the ATPase activity of HSPA9. As to quaternary structure, component of the cytoplasmic core iron-sulfur cluster (ISC) complex composed at least of NFS1, LYRM4, and ISCU; this complex interacts with FXN. Monomer; each monomer binds to the C-terminal regions of NFS1 (cytoplasmic and homodimer form). Interacts with NFS1 (cytoplasmic and homodimer form); this interaction promotes de novo iron-sulfur cluster formation. Interacts with HSCB (cytoplasmic form); this interaction stabilizes the (Fe-S) clusters on ISCU. Post-translationally, phosphorylation at Ser-14 is required for ISCU protein stabilization in the cytosol, whereas dephosphorylation of Ser-14, due to the inhibition of mTORC1 (mammalian target of rapamycin complex 1) complex, leads to degradation of the precursor form and ultimately to a decrease in the mitochondrial mature form. Cysteine persulfide is reduced by thiol-containing molecules such as glutathione and L-cysteine. As to expression, detected in heart, liver, skeletal muscle, brain, pancreas, kidney, lung and placenta.

It is found in the mitochondrion. It localises to the cytoplasm. The protein localises to the nucleus. Mitochondrial scaffold protein, of the core iron-sulfur cluster (ISC) assembly complex, that provides the structural architecture on which the [2Fe-2S] clusters are assembled. The core iron-sulfur cluster (ISC) assembly complex is involved in the de novo synthesis of a [2Fe-2S] cluster, the first step of the mitochondrial iron-sulfur protein biogenesis. This process is initiated by the cysteine desulfurase complex (NFS1:LYRM4:NDUFAB1) that produces persulfide which is delivered on the scaffold protein ISCU in a FXN-dependent manner. Then this complex is stabilized by FDX2 which provides reducing equivalents to accomplish the [2Fe-2S] cluster assembly. Finally, the [2Fe-2S] cluster is transferred from ISCU to chaperone proteins, including HSCB, HSPA9 and GLRX5. Exists as two slow interchanging conformational states, a structured (S) and disordered (D) form. May modulate NFS1 desulfurase activity in a zinc-dependent manner. Modulates the interaction between FXN and the cysteine desulfurase complex. Its function is as follows. Cytoplasmic scaffold protein, of the cytoplasmic core iron-sulfur cluster (ISC) assembly complex that provides the structural architecture on which the Fe-S clusters are assembled and may be involved in the cytoplasmic iron-sulfur protein biogenesis. This Homo sapiens (Human) protein is Iron-sulfur cluster assembly enzyme ISCU.